Consider the following 231-residue polypeptide: Phosphoglycolate phosphatase (231 aa).

Asp9 acts as the Nucleophile in catalysis. 2 residues coordinate Mg(2+): Asp9 and Asp11. Asp11 acts as the Proton donor in catalysis. Substrate is bound at residue Lys154. 2 residues coordinate Mg(2+): Asp177 and Asp181.

This sequence belongs to the archaeal SPP-like hydrolase family. Homodimer. It depends on Mg(2+) as a cofactor.

It catalyses the reaction 2-phosphoglycolate + H2O = glycolate + phosphate. Functionally, catalyzes the dephosphorylation of 2-phosphoglycolate. Has phosphatase activity towards p-nitrophenylphosphate (in vitro). This Pyrococcus horikoshii (strain ATCC 700860 / DSM 12428 / JCM 9974 / NBRC 100139 / OT-3) protein is Phosphoglycolate phosphatase.